A 69-amino-acid chain; its full sequence is DNA-directed RNA polymerase subunit epsilon (69 aa).

This sequence belongs to the RNA polymerase subunit epsilon family. As to quaternary structure, RNAP is composed of a core of 2 alpha, a beta and a beta' subunit. The core is associated with a delta subunit, and at least one of epsilon or omega. When a sigma factor is associated with the core the holoenzyme is formed, which can initiate transcription.

It catalyses the reaction RNA(n) + a ribonucleoside 5'-triphosphate = RNA(n+1) + diphosphate. Its function is as follows. A non-essential component of RNA polymerase (RNAP). This is DNA-directed RNA polymerase subunit epsilon from Geobacillus sp. (strain WCH70).